A 502-amino-acid chain; its full sequence is ATP synthase subunit alpha, chloroplastic (502 aa).

170-177 (GDRQTGKS) contributes to the ATP binding site.

Belongs to the ATPase alpha/beta chains family. As to quaternary structure, F-type ATPases have 2 components, CF(1) - the catalytic core - and CF(0) - the membrane proton channel. CF(1) has five subunits: alpha(3), beta(3), gamma(1), delta(1), epsilon(1). CF(0) has four main subunits: a, b, b' and c.

It is found in the plastid. The protein resides in the chloroplast thylakoid membrane. The catalysed reaction is ATP + H2O + 4 H(+)(in) = ADP + phosphate + 5 H(+)(out). Produces ATP from ADP in the presence of a proton gradient across the membrane. The alpha chain is a regulatory subunit. The sequence is that of ATP synthase subunit alpha, chloroplastic from Guillardia theta (Cryptophyte).